The sequence spans 607 residues: UPF0329 protein ECU06_1610 (607 aa).

Disordered regions lie at residues V312–G410 and T531–V570. Basic and acidic residues predominate over residues H313 to G347. Residues K353–G364 show a composition bias toward basic residues. The span at K365–D374 shows a compositional bias: basic and acidic residues. A compositionally biased stretch (acidic residues) spans R375–A393. The segment covering T531 to S543 has biased composition (polar residues). Residues D549 to S558 show a composition bias toward acidic residues.

Belongs to the UPF0329 family.

This chain is UPF0329 protein ECU06_1610, found in Encephalitozoon cuniculi (strain GB-M1) (Microsporidian parasite).